Here is a 91-residue protein sequence, read N- to C-terminus: Long neurotoxin OH-37 (91 aa).

Residues 1–21 (MKTLLLTLVVMTIVCLDLGYS) form the signal peptide. 5 cysteine pairs are disulfide-bonded: Cys-24-Cys-41, Cys-34-Cys-62, Cys-47-Cys-51, Cys-66-Cys-77, and Cys-78-Cys-83.

It belongs to the three-finger toxin family. Long-chain subfamily. Type II alpha-neurotoxin sub-subfamily. As to expression, expressed by the venom gland.

It is found in the secreted. Its function is as follows. Binds with high affinity to muscular (alpha-1/CHRNA1) and neuronal (alpha-7/CHRNA7) nicotinic acetylcholine receptor (nAChR) and inhibits acetylcholine from binding to the receptor, thereby impairing neuromuscular and neuronal transmission. This is Long neurotoxin OH-37 from Ophiophagus hannah (King cobra).